The following is a 1418-amino-acid chain: JmjC domain-containing histone demethylation protein 1 (1418 aa).

Disordered regions lie at residues 1–86, 102–162, and 308–329; these read MIGA…SSST, APLS…STFD, and GADRASLDVPPRGDDDTESDEN. The segment covering 44 to 60 has biased composition (basic and acidic residues); it reads WIDRGDSQAASYDRDRV. Over residues 61 to 71 the composition is skewed to polar residues; it reads TSNNDVYSSTN. The segment covering 127–139 has biased composition (basic and acidic residues); sequence STERPAKRPRSEK. Polar residues predominate over residues 143 to 162; the sequence is PLHQPQTTVAPDANPSSTFD. Basic and acidic residues predominate over residues 308–321; that stretch reads GADRASLDVPPRGD. The PHD-type zinc-finger motif lies at 331-391; it reads QANCAACNLV…KFICRRCRPI (61 aa). Positions 588–746 constitute a JmjC domain; sequence VSQSKLGKLI…MQIKVAKIEK (159 aa). Thr639 is a binding site for substrate. The Fe cation site is built by His642 and Asp644. Lys659 contacts substrate. His714 lines the Fe cation pocket. Disordered stretches follow at residues 891–964, 1090–1118, 1130–1195, and 1250–1394; these read PQWT…TVEI, NAATSKVHDGSPEGLNTGKKGRSKACDDC, YGRI…HTQR, and KPTA…DEPD. Basic and acidic residues predominate over residues 907-925; that stretch reads LTEKKPAGRPSRRSERNAE. Basic and acidic residues-rich tracts occupy residues 1130-1143 and 1186-1195; these read YGRIDPIKAQERSK and AEGDMSHTQR. Residues 1250–1263 are compositionally biased toward polar residues; sequence KPTASLVSPPTSQA. The span at 1341-1352 shows a compositional bias: low complexity; sequence SSKKPASRPSSS.

It belongs to the JHDM1 histone demethylase family. Fe(2+) serves as cofactor.

Its subcellular location is the nucleus. The enzyme catalyses N(6),N(6)-dimethyl-L-lysyl(36)-[histone H3] + 2 2-oxoglutarate + 2 O2 = L-lysyl(36)-[histone H3] + 2 formaldehyde + 2 succinate + 2 CO2. Functionally, histone demethylase that specifically demethylates 'Lys-36' of histone H3, thereby playing a central role in histone code. The chain is JmjC domain-containing histone demethylation protein 1 (jhd1) from Aspergillus fumigatus (strain ATCC MYA-4609 / CBS 101355 / FGSC A1100 / Af293) (Neosartorya fumigata).